The chain runs to 380 residues: Queuine tRNA-ribosyltransferase (380 aa).

The active-site Proton acceptor is the Asp95. Residues 95-99, Asp149, Gln192, and Gly219 contribute to the substrate site; that span reads DSGGF. Residues 250–256 form an RNA binding region; the sequence is GVGSPDS. Residue Asp269 is the Nucleophile of the active site. An RNA binding; important for wobble base 34 recognition region spans residues 274–278; sequence TRIGR. Residues Cys307, Cys309, Cys312, and His338 each contribute to the Zn(2+) site.

The protein belongs to the queuine tRNA-ribosyltransferase family. In terms of assembly, homodimer. Within each dimer, one monomer is responsible for RNA recognition and catalysis, while the other monomer binds to the replacement base PreQ1. The cofactor is Zn(2+).

The catalysed reaction is 7-aminomethyl-7-carbaguanine + guanosine(34) in tRNA = 7-aminomethyl-7-carbaguanosine(34) in tRNA + guanine. It participates in tRNA modification; tRNA-queuosine biosynthesis. In terms of biological role, catalyzes the base-exchange of a guanine (G) residue with the queuine precursor 7-aminomethyl-7-deazaguanine (PreQ1) at position 34 (anticodon wobble position) in tRNAs with GU(N) anticodons (tRNA-Asp, -Asn, -His and -Tyr). Catalysis occurs through a double-displacement mechanism. The nucleophile active site attacks the C1' of nucleotide 34 to detach the guanine base from the RNA, forming a covalent enzyme-RNA intermediate. The proton acceptor active site deprotonates the incoming PreQ1, allowing a nucleophilic attack on the C1' of the ribose to form the product. After dissociation, two additional enzymatic reactions on the tRNA convert PreQ1 to queuine (Q), resulting in the hypermodified nucleoside queuosine (7-(((4,5-cis-dihydroxy-2-cyclopenten-1-yl)amino)methyl)-7-deazaguanosine). This is Queuine tRNA-ribosyltransferase from Geobacillus kaustophilus (strain HTA426).